A 287-amino-acid chain; its full sequence is Shikimate dehydrogenase (NADP(+)) (287 aa).

Shikimate is bound by residues 18 to 20 (SYS) and Thr66. Lys70 serves as the catalytic Proton acceptor. Glu82 is a binding site for NADP(+). 2 residues coordinate shikimate: Asn91 and Asp106. Residues 130–134 (GSGGA) and Met228 each bind NADP(+). Tyr230 contributes to the shikimate binding site. Gly251 lines the NADP(+) pocket.

Belongs to the shikimate dehydrogenase family. As to quaternary structure, homodimer.

The catalysed reaction is shikimate + NADP(+) = 3-dehydroshikimate + NADPH + H(+). The protein operates within metabolic intermediate biosynthesis; chorismate biosynthesis; chorismate from D-erythrose 4-phosphate and phosphoenolpyruvate: step 4/7. Its function is as follows. Involved in the biosynthesis of the chorismate, which leads to the biosynthesis of aromatic amino acids. Catalyzes the reversible NADPH linked reduction of 3-dehydroshikimate (DHSA) to yield shikimate (SA). This is Shikimate dehydrogenase (NADP(+)) from Chlorobium chlorochromatii (strain CaD3).